Here is a 348-residue protein sequence, read N- to C-terminus: Fructose-1,6-bisphosphatase class 1 (348 aa).

E92, D111, L113, and D114 together coordinate Mg(2+). Substrate is bound by residues 114–117 (DGSS) and N204. E276 contacts Mg(2+).

This sequence belongs to the FBPase class 1 family. As to quaternary structure, homotetramer. Mg(2+) is required as a cofactor.

It is found in the cytoplasm. The enzyme catalyses beta-D-fructose 1,6-bisphosphate + H2O = beta-D-fructose 6-phosphate + phosphate. It participates in carbohydrate biosynthesis; gluconeogenesis. The sequence is that of Fructose-1,6-bisphosphatase class 1 from Methylorubrum extorquens (strain PA1) (Methylobacterium extorquens).